The following is a 294-amino-acid chain: IVFRAAQKRSDIEIVGINDLLDAEYMAYMLKYDSTHGRFDGTVEVKDGHLVVNGKTIRVTAEKDPANLKWNEIGVDVVAEATGIFLTDETARKHITAGAKKVVLTGPSKDNTPMFVRGANFETYAGQDIVSNRSCTTNCLAPLAKVINDNFGIIEGLMTTVHATTATQKTVDGPSHKDWRGGRGAAQNIIPSSTGAAKAVGKVLPELNGKLTGMAFRVPTPNVSVVDLTVRLEKAASYEEIKKAIKAASEGPMKGVLGYTEDDVVSTDFNGEVCTSVFDAKAGIALNDNFVKLV.

NAD(+) is bound by residues Asp19, Lys63, and Thr105. Residues 134 to 136, Thr165, 194 to 195, and Arg217 each bind D-glyceraldehyde 3-phosphate; these read SCT and TG. The active-site Nucleophile is the Cys135.

Belongs to the glyceraldehyde-3-phosphate dehydrogenase family. In terms of assembly, homotetramer.

It localises to the cytoplasm. It catalyses the reaction D-glyceraldehyde 3-phosphate + phosphate + NAD(+) = (2R)-3-phospho-glyceroyl phosphate + NADH + H(+). The protein operates within carbohydrate degradation; glycolysis; pyruvate from D-glyceraldehyde 3-phosphate: step 1/5. In terms of biological role, catalyzes the oxidative phosphorylation of glyceraldehyde 3-phosphate (G3P) to 1,3-bisphosphoglycerate (BPG) using the cofactor NAD. The first reaction step involves the formation of a hemiacetal intermediate between G3P and a cysteine residue, and this hemiacetal intermediate is then oxidized to a thioester, with concomitant reduction of NAD to NADH. The reduced NADH is then exchanged with the second NAD, and the thioester is attacked by a nucleophilic inorganic phosphate to produce BPG. This is Glyceraldehyde-3-phosphate dehydrogenase (gap) from Klebsiella aerogenes (Enterobacter aerogenes).